We begin with the raw amino-acid sequence, 84 residues long: Control protein C.SmaI (84 aa).

The 55-residue stretch at 19-73 folds into the HTH cro/C1-type domain; it reads VRSYRNINNLSQEQLAEISGLHRTYIGSVERKERNVTLSTLIILAKALNTSVPKL. A DNA-binding region (H-T-H motif) is located at residues 30–49; that stretch reads QEQLAEISGLHRTYIGSVER.

In terms of biological role, may control expression of its associated restriction-modification system SmaI. In Serratia marcescens, this protein is Control protein C.SmaI.